Consider the following 270-residue polypeptide: Decarboxylase NovR (270 aa).

Belongs to the aldolase class II family.

Its pathway is antibiotic biosynthesis; novobiocin biosynthesis. May mediate the 2 consecutive oxidative decarboxylation steps in the biosynthesis of the prenylated hydroxybenzoic acid moiety of novobiocin, an aminocoumarin family antibiotic that targets bacterial DNA gyrases. The polypeptide is Decarboxylase NovR (novR) (Streptomyces niveus (Streptomyces spheroides)).